Here is a 90-residue protein sequence, read N- to C-terminus: MPKARVTKNETAPVSSNPSANRTPVKINSAGTPMWYKVIMFAFMIVGLAWLIINYLVGPQIPFMADLGAWNYGIGFGLMIIGLLMTMGWR.

Residues 1–25 (MPKARVTKNETAPVSSNPSANRTPV) are disordered. Residues 9–22 (NETAPVSSNPSANR) show a composition bias toward polar residues. Transmembrane regions (helical) follow at residues 38 to 58 (VIMF…YLVG) and 67 to 87 (LGAW…LMTM).

This sequence belongs to the CrgA family.

It is found in the cell membrane. In terms of biological role, involved in cell division. The chain is Cell division protein CrgA from Corynebacterium glutamicum (strain ATCC 13032 / DSM 20300 / JCM 1318 / BCRC 11384 / CCUG 27702 / LMG 3730 / NBRC 12168 / NCIMB 10025 / NRRL B-2784 / 534).